Reading from the N-terminus, the 343-residue chain is L-threonine 3-dehydrogenase (343 aa).

Cys-40 is a Zn(2+) binding site. Residues Thr-42 and His-45 each act as charge relay system in the active site. Zn(2+) is bound by residues His-65, Glu-66, Cys-95, Cys-98, Cys-101, and Cys-109. NAD(+) is bound by residues Ile-177, Asp-197, Arg-202, 264-266 (LGI), and 288-289 (IY).

This sequence belongs to the zinc-containing alcohol dehydrogenase family. In terms of assembly, homotetramer. The cofactor is Zn(2+).

The protein localises to the cytoplasm. The catalysed reaction is L-threonine + NAD(+) = (2S)-2-amino-3-oxobutanoate + NADH + H(+). It participates in amino-acid degradation; L-threonine degradation via oxydo-reductase pathway; glycine from L-threonine: step 1/2. Its function is as follows. Catalyzes the NAD(+)-dependent oxidation of L-threonine to 2-amino-3-ketobutyrate. In Photobacterium profundum (strain SS9), this protein is L-threonine 3-dehydrogenase.